An 829-amino-acid chain; its full sequence is Cadherin-3 (829 aa).

Residues 1 to 24 (MGLPRGPLASLLLLQVCWLQCAAS) form the signal peptide. A propeptide spanning residues 25–107 (EPCRAVFREA…SKRILRRHKR (83 aa)) is cleaved from the precursor. 5 consecutive Cadherin domains span residues 108–215 (DWVV…KPKF), 216–328 (TQDT…APMF), 329–440 (DPQK…APVF), 441–546 (VPPS…DHGP), and 547–650 (VPEP…CPGP). Residues 108–654 (DWVVAPISVP…ETCPGPWKGG (547 aa)) lie on the Extracellular side of the membrane. An N-linked (GlcNAc...) asparagine glycan is attached at Asn-200. N-linked (GlcNAc...) asparagine glycosylation occurs at Asn-566. The helical transmembrane segment at 655 to 677 (FILPVLGAVLALLFLLLVLLLLV) threads the bilayer. The Cytoplasmic segment spans residues 678–829 (RKKRKIKEPL…ADMYGGGEDD (152 aa)).

As to quaternary structure, interacts with CDCP1 and CTNNB1. In terms of tissue distribution, expressed in some normal epithelial tissues and in some carcinoma cell lines.

The protein localises to the cell membrane. In terms of biological role, cadherins are calcium-dependent cell adhesion proteins. They preferentially interact with themselves in a homophilic manner in connecting cells; cadherins may thus contribute to the sorting of heterogeneous cell types. In Homo sapiens (Human), this protein is Cadherin-3 (CDH3).